The primary structure comprises 561 residues: Foot protein 1 variant 1 (561 aa).

A signal peptide spans 1 to 20 (MARNMNILTLFAVLIGSASA). Tyrosine 22 carries the 3',4'-dihydroxyphenylalanine modification. Position 33 is a 4-hydroxyproline (proline 33). The stretch at 41 to 50 (VHPPAWTAWK) is one A-1; approximate repeat. Positions 41–410 (VHPPAWTAWK…APPPAWTAWK (370 aa)) are 13 X 10 AA A-P-P-P-A-W-T-A-W-K. A 7'-hydroxytryptophan mark is found at tryptophan 46, tryptophan 49, tryptophan 56, and tryptophan 59. C-linked (Man) hydroxytryptophan glycans are attached at residues tryptophan 46, tryptophan 49, tryptophan 56, and tryptophan 59. Residues 51-60 (AHPPAWTAWK) form an A-2; approximate repeat. The stretch at 61-70 (ATPKPWTAWK) is one B-1 repeat. The 27 X 10 AA A-T-P-K-P-W-T-A-W-K stretch occupies residues 61 to 440 (ATPKPWTAWK…ATPKPWTAWR (380 aa)). The residue at position 65 (proline 65) is a 4-hydroxyproline. Residue tryptophan 66 is glycosylated (C-linked (Man) tryptophan). Position 69 is a 7'-hydroxytryptophan (tryptophan 69). Tryptophan 69 carries a C-linked (Man) hydroxytryptophan glycan. One copy of the A-3 repeat lies at 71-80 (APPPAWTAWK). A 4-hydroxyproline mark is found at proline 72, proline 73, and proline 74. 2 positions are modified to 7'-hydroxytryptophan: tryptophan 76 and tryptophan 79. 2 C-linked (Man) hydroxytryptophan glycosylation sites follow: tryptophan 76 and tryptophan 79. Residues 81–90 (ATPKPWTAWK) form a B-2 repeat. Proline 85 bears the 4-hydroxyproline mark. Tryptophan 86 is a glycosylation site (C-linked (Man) tryptophan). Tryptophan 89 is subject to 7'-hydroxytryptophan. Tryptophan 89 carries a C-linked (Man) hydroxytryptophan glycan. An A-4; approximate repeat occupies 91-100 (APPPTWTAWK). Residues proline 92, proline 93, and proline 94 each carry the 4-hydroxyproline modification. 7'-hydroxytryptophan occurs at positions 96 and 99. C-linked (Man) hydroxytryptophan glycosylation is found at tryptophan 96 and tryptophan 99. One copy of the B-3 repeat lies at 101–110 (ATPKPWTAWK). Proline 105 is modified (4-hydroxyproline). C-linked (Man) tryptophan glycosylation is present at tryptophan 106. Tryptophan 109 bears the 7'-hydroxytryptophan mark. Tryptophan 109 carries a C-linked (Man) hydroxytryptophan glycan. The stretch at 111 to 120 (APPPAWTAWK) is one A-5 repeat. Proline 112, proline 113, and proline 114 each carry 4-hydroxyproline. Residues tryptophan 116 and tryptophan 119 each carry the 7'-hydroxytryptophan modification. Tryptophan 116 and tryptophan 119 each carry a C-linked (Man) hydroxytryptophan glycan. One copy of the B-4; approximate repeat lies at 121–130 (ATLKPWTAWK). Proline 125 carries the post-translational modification 4-hydroxyproline. C-linked (Man) tryptophan glycosylation is present at tryptophan 126. 7'-hydroxytryptophan is present on tryptophan 129. C-linked (Man) hydroxytryptophan glycosylation is present at tryptophan 129. The B-5 repeat unit spans residues 131–140 (ATPKPWTAWK). At proline 135 the chain carries 4-hydroxyproline. C-linked (Man) tryptophan glycosylation is present at tryptophan 136. Tryptophan 139 is subject to 7'-hydroxytryptophan. A C-linked (Man) hydroxytryptophan glycan is attached at tryptophan 139. The stretch at 141-150 (ATPKPWTAWK) is one B-6 repeat. Position 145 is a 4-hydroxyproline (proline 145). Residue tryptophan 146 is glycosylated (C-linked (Man) tryptophan). Position 149 is a 7'-hydroxytryptophan (tryptophan 149). Residue tryptophan 149 is glycosylated (C-linked (Man) hydroxytryptophan). A B-7 repeat occupies 151-160 (ATPKPWTAWK). The residue at position 155 (proline 155) is a 4-hydroxyproline. A C-linked (Man) tryptophan glycan is attached at tryptophan 156. Tryptophan 159 is modified (7'-hydroxytryptophan). Tryptophan 159 is a glycosylation site (C-linked (Man) hydroxytryptophan). Residues 161–170 (ATPKPWTAWK) form a B-8 repeat. Residue proline 165 is modified to 4-hydroxyproline. A C-linked (Man) tryptophan glycan is attached at tryptophan 166. Tryptophan 169 carries the 7'-hydroxytryptophan modification. A C-linked (Man) hydroxytryptophan glycan is attached at tryptophan 169. Residues 171-180 (ATPKPWTVWK) form a B-9; approximate repeat. A 4-hydroxyproline modification is found at proline 175. C-linked (Man) tryptophan glycosylation occurs at tryptophan 176. Tryptophan 179 is modified (7'-hydroxytryptophan). Tryptophan 179 carries a C-linked (Man) hydroxytryptophan glycan. The stretch at 181–190 (ATPKPWTAWK) is one B-10 repeat. The residue at position 185 (proline 185) is a 4-hydroxyproline. A glycan (C-linked (Man) tryptophan) is linked at tryptophan 186. Tryptophan 189 bears the 7'-hydroxytryptophan mark. C-linked (Man) hydroxytryptophan glycosylation occurs at tryptophan 189. A B-11 repeat occupies 191 to 200 (ATPKPWTAWK). Position 195 is a 4-hydroxyproline (proline 195). Tryptophan 196 carries C-linked (Man) tryptophan glycosylation. Tryptophan 199 is subject to 7'-hydroxytryptophan. Residue tryptophan 199 is glycosylated (C-linked (Man) hydroxytryptophan). The A-6; approximate repeat unit spans residues 201–210 (APPPAWSAWK). 4-hydroxyproline occurs at positions 202, 203, and 204. Residues tryptophan 206 and tryptophan 209 each carry the 7'-hydroxytryptophan modification. C-linked (Man) hydroxytryptophan glycans are attached at residues tryptophan 206 and tryptophan 209. The B-12; approximate repeat unit spans residues 211 to 220 (ATPKPWTVWK). At proline 215 the chain carries 4-hydroxyproline. Tryptophan 216 is a glycosylation site (C-linked (Man) tryptophan). Residue tryptophan 219 is modified to 7'-hydroxytryptophan. Tryptophan 219 carries a C-linked (Man) hydroxytryptophan glycan. The stretch at 221–230 (ATPKPWTAWK) is one B-13 repeat. Residue proline 225 is modified to 4-hydroxyproline. Tryptophan 226 is a glycosylation site (C-linked (Man) tryptophan). Tryptophan 229 is subject to 7'-hydroxytryptophan. Tryptophan 229 carries a C-linked (Man) hydroxytryptophan glycan. The B-14 repeat unit spans residues 231-240 (ATPKPWTAWK). A 4-hydroxyproline modification is found at proline 235. C-linked (Man) tryptophan glycosylation occurs at tryptophan 236. Residue tryptophan 239 is modified to 7'-hydroxytryptophan. Residue tryptophan 239 is glycosylated (C-linked (Man) hydroxytryptophan). The B-15; approximate repeat unit spans residues 241–250 (ATPKPWTVWK). A 4-hydroxyproline modification is found at proline 245. A glycan (C-linked (Man) tryptophan) is linked at tryptophan 246. Tryptophan 249 carries the post-translational modification 7'-hydroxytryptophan. A glycan (C-linked (Man) hydroxytryptophan) is linked at tryptophan 249. The stretch at 251–260 (ATPKPWTAWK) is one B-16 repeat. Proline 255 bears the 4-hydroxyproline mark. Tryptophan 256 carries a C-linked (Man) tryptophan glycan. Residue tryptophan 259 is modified to 7'-hydroxytryptophan. The C-linked (Man) hydroxytryptophan glycan is linked to tryptophan 259. One copy of the A-7 repeat lies at 261–270 (APPPAWTAWK). 4-hydroxyproline is present on residues proline 262, proline 263, and proline 264. Tryptophan 266 and tryptophan 269 each carry 7'-hydroxytryptophan. Residues tryptophan 266 and tryptophan 269 are each glycosylated (C-linked (Man) hydroxytryptophan). One copy of the B-17 repeat lies at 271 to 280 (ATPKPWTAWK). Proline 275 carries the 4-hydroxyproline modification. Residue tryptophan 276 is glycosylated (C-linked (Man) tryptophan). Tryptophan 279 bears the 7'-hydroxytryptophan mark. Tryptophan 279 carries C-linked (Man) hydroxytryptophan glycosylation. The stretch at 281-290 (APPPTWTAWK) is one A-8; approximate repeat. 4-hydroxyproline occurs at positions 282, 283, and 284. 2 positions are modified to 7'-hydroxytryptophan: tryptophan 286 and tryptophan 289. C-linked (Man) hydroxytryptophan glycans are attached at residues tryptophan 286 and tryptophan 289. The B-18 repeat unit spans residues 291-300 (ATPKPWTAWK). The residue at position 295 (proline 295) is a 4-hydroxyproline. Tryptophan 296 carries a C-linked (Man) tryptophan glycan. Tryptophan 299 carries the post-translational modification 7'-hydroxytryptophan. Residue tryptophan 299 is glycosylated (C-linked (Man) hydroxytryptophan). Residues 301-310 (APPPAWSAWK) form an A-9; approximate repeat. 4-hydroxyproline occurs at positions 302, 303, and 304. 7'-hydroxytryptophan occurs at positions 306 and 309. Residues tryptophan 306 and tryptophan 309 are each glycosylated (C-linked (Man) hydroxytryptophan). One copy of the B-19 repeat lies at 311 to 320 (ATPKPWTAWK). At proline 315 the chain carries 4-hydroxyproline. A glycan (C-linked (Man) tryptophan) is linked at tryptophan 316. 7'-hydroxytryptophan is present on tryptophan 319. Tryptophan 319 carries C-linked (Man) hydroxytryptophan glycosylation. The stretch at 321 to 330 (ATPKPWTAWK) is one B-20 repeat. The residue at position 325 (proline 325) is a 4-hydroxyproline. Tryptophan 326 carries a C-linked (Man) tryptophan glycan. The residue at position 329 (tryptophan 329) is a 7'-hydroxytryptophan. A glycan (C-linked (Man) hydroxytryptophan) is linked at tryptophan 329. One copy of the B-21 repeat lies at 331–340 (ATPKPWTAWK). Proline 335 carries the post-translational modification 4-hydroxyproline. Residue tryptophan 336 is glycosylated (C-linked (Man) tryptophan). Tryptophan 339 carries the 7'-hydroxytryptophan modification. Tryptophan 339 carries C-linked (Man) hydroxytryptophan glycosylation. The stretch at 341–350 (ATPKPWTAWK) is one B-22 repeat. At proline 345 the chain carries 4-hydroxyproline. Tryptophan 346 carries C-linked (Man) tryptophan glycosylation. Tryptophan 349 is subject to 7'-hydroxytryptophan. Tryptophan 349 carries C-linked (Man) hydroxytryptophan glycosylation. One copy of the A-10; approximate repeat lies at 351 to 360 (VPPPAWTAWK). Proline 352, proline 353, and proline 354 each carry 4-hydroxyproline. A 7'-hydroxytryptophan mark is found at tryptophan 356, tryptophan 359, tryptophan 366, and tryptophan 369. 4 C-linked (Man) hydroxytryptophan glycosylation sites follow: tryptophan 356, tryptophan 359, tryptophan 366, and tryptophan 369. The A-11; approximate repeat unit spans residues 361 to 370 (AHPPAWTAWK). The stretch at 371-380 (ATPKPWTAWK) is one B-23 repeat. 4-hydroxyproline is present on proline 375. Tryptophan 376 carries a C-linked (Man) tryptophan glycan. Residue tryptophan 379 is modified to 7'-hydroxytryptophan. Tryptophan 379 is a glycosylation site (C-linked (Man) hydroxytryptophan). One copy of the A-12 repeat lies at 381 to 390 (APPPAWTAWK). 4-hydroxyproline occurs at positions 382, 383, and 384. 7'-hydroxytryptophan is present on residues tryptophan 386 and tryptophan 389. 2 C-linked (Man) hydroxytryptophan glycosylation sites follow: tryptophan 386 and tryptophan 389. The stretch at 391–400 (ATPKPWTAWK) is one B-24 repeat. 4-hydroxyproline is present on proline 395. Residue tryptophan 396 is glycosylated (C-linked (Man) tryptophan). Tryptophan 399 is modified (7'-hydroxytryptophan). The C-linked (Man) hydroxytryptophan glycan is linked to tryptophan 399. One copy of the A-13 repeat lies at 401 to 410 (APPPAWTAWK). 3 positions are modified to 4-hydroxyproline: proline 402, proline 403, and proline 404. A 7'-hydroxytryptophan mark is found at tryptophan 406 and tryptophan 409. Tryptophan 406 and tryptophan 409 each carry a C-linked (Man) hydroxytryptophan glycan. A B-25 repeat occupies 411–420 (ATPKPWTAWK). Proline 415 carries the post-translational modification 4-hydroxyproline. Tryptophan 416 is a glycosylation site (C-linked (Man) tryptophan). 7'-hydroxytryptophan is present on tryptophan 419. C-linked (Man) hydroxytryptophan glycosylation is present at tryptophan 419. The stretch at 421 to 430 (ATPKPWTVWK) is one B-26; approximate repeat. The residue at position 425 (proline 425) is a 4-hydroxyproline. A glycan (C-linked (Man) tryptophan) is linked at tryptophan 426. Position 429 is a 7'-hydroxytryptophan (tryptophan 429). The C-linked (Man) hydroxytryptophan glycan is linked to tryptophan 429. One copy of the B-27; approximate repeat lies at 431–440 (ATPKPWTAWR). At proline 435 the chain carries 4-hydroxyproline. A C-linked (Man) tryptophan glycan is attached at tryptophan 436. Tryptophan 439 is subject to 7'-hydroxytryptophan. The C-linked (Man) hydroxytryptophan glycan is linked to tryptophan 439. The interval 452–507 (GHGYGGYGKPGKPGKPGSKGPRGPAGPPGATGKTGRTGATGKRGPPGYPGKPGVPG) is disordered. Positions 453-462 (HGYGGYGKPG) are enriched in gly residues. One can recognise a Collagen-like domain in the interval 459 to 510 (GKPGKPGKPGSKGPRGPAGPPGATGKTGRTGATGKRGPPGYPGKPGVPGRNG). Residues 466–496 (KPGSKGPRGPAGPPGATGKTGRTGATGKRGP) are compositionally biased toward low complexity. Residues proline 497, proline 500, and proline 506 each carry the 4-hydroxyproline modification.

In terms of tissue distribution, produced by the byssal gland.

Its subcellular location is the secreted. Functionally, provides adhesiveness to the mussel's foot. Mussels produce one of the strongest water insoluble glues. The mussel's adhesive is a bundle of threads, called a byssus, formed by a fibrous collagenous core coated with adhesive proteins. The chain is Foot protein 1 variant 1 from Perna viridis (Asian green mussel).